The chain runs to 296 residues: Bifunctional protein FolD (296 aa).

Residues 168–170, serine 197, and threonine 238 contribute to the NADP(+) site; that span reads GRS.

It belongs to the tetrahydrofolate dehydrogenase/cyclohydrolase family. In terms of assembly, homodimer.

The catalysed reaction is (6R)-5,10-methylene-5,6,7,8-tetrahydrofolate + NADP(+) = (6R)-5,10-methenyltetrahydrofolate + NADPH. It carries out the reaction (6R)-5,10-methenyltetrahydrofolate + H2O = (6R)-10-formyltetrahydrofolate + H(+). Its pathway is one-carbon metabolism; tetrahydrofolate interconversion. Catalyzes the oxidation of 5,10-methylenetetrahydrofolate to 5,10-methenyltetrahydrofolate and then the hydrolysis of 5,10-methenyltetrahydrofolate to 10-formyltetrahydrofolate. The polypeptide is Bifunctional protein FolD (Porphyromonas gingivalis (strain ATCC BAA-308 / W83)).